The following is a 301-amino-acid chain: MPGRFTVALVIALGGTCGVADALPLGQTDDPMIVAHRAGTRDFPENTVLAITNAVAAGVDGMWLTVQVSSDGVPVLYRPSDLATLTDGAGPVNSKTVQQLQQLNAGWNFTTPGVEGHPYRQRATPIPTLEQAIGATPPDMTLFLDLKQTPPQPLVSAVAQVLTRTGAAGRSIVYSTNADITAAASRQEGLQVAESRDVTRQRLFNMALNHHCDPQPDPGKWAGFELHRDVTVTEEFTLGSGISAVNAELWDEASVDCFRSQSGMKVMGFAVKTVDDYRLAHKIGLDAVLVDSPLAAQQWRH.

Positions 1-22 (MPGRFTVALVIALGGTCGVADA) are cleaved as a signal peptide. In terms of domain architecture, GP-PDE spans 31-300 (PMIVAHRAGT…DSPLAAQQWR (270 aa)).

This is an uncharacterized protein from Mycobacterium tuberculosis (strain ATCC 25618 / H37Rv).